A 353-amino-acid chain; its full sequence is Photosystem II protein D1 (353 aa).

The residue at position 2 (Thr2) is an N-acetylthreonine. Thr2 carries the phosphothreonine modification. The next 3 membrane-spanning stretches (helical) occupy residues Tyr29–Ser46, His118–Leu133, and Trp142–Ala156. His118 provides a ligand contact to chlorophyll a. Residue Tyr126 coordinates pheophytin a. [CaMn4O5] cluster is bound by residues Asp170 and Glu189. A helical membrane pass occupies residues Phe197–Leu218. His198 contributes to the chlorophyll a binding site. Residues His215 and Ser264–Phe265 contribute to the a quinone site. Position 215 (His215) interacts with Fe cation. A Fe cation-binding site is contributed by His272. Residues Phe274–Leu288 form a helical membrane-spanning segment. The [CaMn4O5] cluster site is built by His332, Glu333, Asp342, and Ala344. A propeptide spanning residues Ala345–Gly353 is cleaved from the precursor.

This sequence belongs to the reaction center PufL/M/PsbA/D family. As to quaternary structure, PSII is composed of 1 copy each of membrane proteins PsbA, PsbB, PsbC, PsbD, PsbE, PsbF, PsbH, PsbI, PsbJ, PsbK, PsbL, PsbM, PsbT, PsbX, PsbY, PsbZ, Psb30/Ycf12, at least 3 peripheral proteins of the oxygen-evolving complex and a large number of cofactors. It forms dimeric complexes. The cofactor is The D1/D2 heterodimer binds P680, chlorophylls that are the primary electron donor of PSII, and subsequent electron acceptors. It shares a non-heme iron and each subunit binds pheophytin, quinone, additional chlorophylls, carotenoids and lipids. D1 provides most of the ligands for the Mn4-Ca-O5 cluster of the oxygen-evolving complex (OEC). There is also a Cl(-1) ion associated with D1 and D2, which is required for oxygen evolution. The PSII complex binds additional chlorophylls, carotenoids and specific lipids.. Post-translationally, tyr-161 forms a radical intermediate that is referred to as redox-active TyrZ, YZ or Y-Z. C-terminally processed by CTPA; processing is essential to allow assembly of the oxygen-evolving complex and thus photosynthetic growth.

The protein resides in the plastid. It localises to the chloroplast thylakoid membrane. It catalyses the reaction 2 a plastoquinone + 4 hnu + 2 H2O = 2 a plastoquinol + O2. Photosystem II (PSII) is a light-driven water:plastoquinone oxidoreductase that uses light energy to abstract electrons from H(2)O, generating O(2) and a proton gradient subsequently used for ATP formation. It consists of a core antenna complex that captures photons, and an electron transfer chain that converts photonic excitation into a charge separation. The D1/D2 (PsbA/PsbD) reaction center heterodimer binds P680, the primary electron donor of PSII as well as several subsequent electron acceptors. This is Photosystem II protein D1 from Illicium oligandrum (Star anise).